Consider the following 547-residue polypeptide: Glucose-6-phosphate isomerase (547 aa).

Glu351 functions as the Proton donor in the catalytic mechanism. Residues His382 and Lys510 contribute to the active site.

Belongs to the GPI family.

It is found in the cytoplasm. The catalysed reaction is alpha-D-glucose 6-phosphate = beta-D-fructose 6-phosphate. The protein operates within carbohydrate biosynthesis; gluconeogenesis. It participates in carbohydrate degradation; glycolysis; D-glyceraldehyde 3-phosphate and glycerone phosphate from D-glucose: step 2/4. Functionally, catalyzes the reversible isomerization of glucose-6-phosphate to fructose-6-phosphate. The protein is Glucose-6-phosphate isomerase of Saccharophagus degradans (strain 2-40 / ATCC 43961 / DSM 17024).